The sequence spans 105 residues: RxLR effector protein PITG_18670 (105 aa).

The N-terminal stretch at 1–21 (MRSIFYFALAFAALTCSNASA) is a signal peptide. Positions 39 to 57 (RSLRVAGQEVARGDRGEEI) match the RxLR-dEER motif.

It belongs to the RxLR effector family.

The protein resides in the secreted. The protein localises to the host nucleus. Its subcellular location is the host nucleolus. It localises to the host cytoplasm. In terms of biological role, effector that enhances P.infestans colonization of Nicotiana benthamiana leaves. The chain is RxLR effector protein PITG_18670 from Phytophthora infestans (strain T30-4) (Potato late blight agent).